Consider the following 207-residue polypeptide: Na(+)-translocating ferredoxin:NAD(+) oxidoreductase complex subunit G (207 aa).

A helical membrane pass occupies residues glycine 18–valine 38. Threonine 185 is subject to FMN phosphoryl threonine.

It belongs to the RnfG family. In terms of assembly, the complex is composed of six subunits: RnfA, RnfB, RnfC, RnfD, RnfE and RnfG. FMN serves as cofactor.

The protein resides in the cell membrane. The enzyme catalyses 2 reduced [2Fe-2S]-[ferredoxin] + Na(+)(in) + NAD(+) + H(+) = 2 oxidized [2Fe-2S]-[ferredoxin] + Na(+)(out) + NADH. In terms of biological role, part of a membrane-bound complex that couples electron transfer with translocation of ions across the membrane. Couples electron transfer from reduced ferredoxin to NAD(+) with electrogenic movement of Na(+) out of the cell. Involved in caffeate respiration. In Acetobacterium woodii (strain ATCC 29683 / DSM 1030 / JCM 2381 / KCTC 1655 / WB1), this protein is Na(+)-translocating ferredoxin:NAD(+) oxidoreductase complex subunit G.